The following is a 140-amino-acid chain: uncharacterized protein (140 aa).

A disordered region spans residues 80 to 115 (KNGTRRHALPSPLEGSFQPGRQIPPPQTPSTDPQTL).

This is an uncharacterized protein from Homo sapiens (Human).